Consider the following 444-residue polypeptide: ATP-dependent protease ATPase subunit HslU (444 aa).

ATP-binding positions include Ile18, 60-65 (GVGKTE), Asp256, Glu322, and Arg394.

Belongs to the ClpX chaperone family. HslU subfamily. In terms of assembly, a double ring-shaped homohexamer of HslV is capped on each side by a ring-shaped HslU homohexamer. The assembly of the HslU/HslV complex is dependent on binding of ATP.

It localises to the cytoplasm. Functionally, ATPase subunit of a proteasome-like degradation complex; this subunit has chaperone activity. The binding of ATP and its subsequent hydrolysis by HslU are essential for unfolding of protein substrates subsequently hydrolyzed by HslV. HslU recognizes the N-terminal part of its protein substrates and unfolds these before they are guided to HslV for hydrolysis. The protein is ATP-dependent protease ATPase subunit HslU of Klebsiella pneumoniae subsp. pneumoniae (strain ATCC 700721 / MGH 78578).